We begin with the raw amino-acid sequence, 619 residues long: Dynein axonemal intermediate chain 2 (619 aa).

5 WD repeats span residues 214–254 (KPSS…LVAE), 261–302 (SHRD…EPTE), 362–401 (GHHG…SSIM), 405–445 (YHMA…CDPA), and 450–489 (VCDD…STLQ). The tract at residues 566 to 619 (EALKKKPKPKKASIEVEGEDELEDIAGEEEESGIIMGEDTGEDDMDEKNEGGAP) is disordered. Acidic residues predominate over residues 581–597 (VEGEDELEDIAGEEEES).

Belongs to the dynein intermediate chain family. As to quaternary structure, consists of at least two heavy chains and a number of intermediate and light chains. Interacts with DNAAF2. Interacts with DNAAF6/PIH1D3. Interacts with HEATR2; probably involved in outer arm dynein assembly. Interacts with CFAP53.

It is found in the cytoplasm. The protein resides in the cytoskeleton. The protein localises to the cilium axoneme. Its subcellular location is the dynein axonemal particle. In terms of biological role, part of the dynein complex of respiratory cilia. This chain is Dynein axonemal intermediate chain 2 (Dnai2), found in Rattus norvegicus (Rat).